We begin with the raw amino-acid sequence, 91 residues long: Large ribosomal subunit protein uL23c (91 aa).

This sequence belongs to the universal ribosomal protein uL23 family. In terms of assembly, part of the 50S ribosomal subunit.

The protein localises to the plastid. It is found in the chloroplast. Functionally, binds to 23S rRNA. In Pinus koraiensis (Korean pine), this protein is Large ribosomal subunit protein uL23c (rpl23).